A 158-amino-acid chain; its full sequence is Methylated-DNA--protein-cysteine methyltransferase (158 aa).

The Nucleophile; methyl group acceptor role is filled by Cys126.

The protein belongs to the MGMT family.

It localises to the cytoplasm. The enzyme catalyses a 6-O-methyl-2'-deoxyguanosine in DNA + L-cysteinyl-[protein] = S-methyl-L-cysteinyl-[protein] + a 2'-deoxyguanosine in DNA. The catalysed reaction is a 4-O-methyl-thymidine in DNA + L-cysteinyl-[protein] = a thymidine in DNA + S-methyl-L-cysteinyl-[protein]. In terms of biological role, involved in the cellular defense against the biological effects of O6-methylguanine (O6-MeG) and O4-methylthymine (O4-MeT) in DNA. Repairs the methylated nucleobase in DNA by stoichiometrically transferring the methyl group to a cysteine residue in the enzyme. This is a suicide reaction: the enzyme is irreversibly inactivated. This is Methylated-DNA--protein-cysteine methyltransferase from Methanosarcina barkeri (strain Fusaro / DSM 804).